The following is a 298-amino-acid chain: S-adenosylmethionine-dependent nucleotide dehydratase (298 aa).

Positions 8–235 (ANKELVVNWH…QRFGEIIYAE (228 aa)) constitute a Radical SAM core domain. [4Fe-4S] cluster is bound by residues Cys22, Cys26, and Cys29.

This sequence belongs to the radical SAM superfamily. Viperin family. Requires [4Fe-4S] cluster as cofactor.

It catalyses the reaction CTP + AH2 + S-adenosyl-L-methionine = 3'-deoxy-3',4'-didehydro-CTP + 5'-deoxyadenosine + L-methionine + A + H2O + H(+). The catalysed reaction is UTP + AH2 + S-adenosyl-L-methionine = 3'-deoxy-3',4'-didehydro-UTP + 5'-deoxyadenosine + L-methionine + A + H2O + H(+). Its function is as follows. Expression of pVip8 in E.coli (strain MG1655) confers resistance to phages lambda, P1, SECphi8 and T7. Prevents culture collapse upon infection with T7. Catalyzes the conversion of cytidine triphosphate (CTP) to 3'-deoxy-3',4'-didehydro-CTP (ddhCTP) and uridine triphosphate (UTP) to 3'-deoxy-3',4'-didehydro-UTP (ddhUTP), probably via a SAM-dependent radical mechanism. The modified nucleotides repress transcription from T7 RNA polymerase-directed genes (possibly by acting as chain terminators), strongly suggesting these nucleotides block viral polymerase transcription. The sequence is that of S-adenosylmethionine-dependent nucleotide dehydratase from Psychrobacter lutiphocae (strain DSM 21542 / CCUG 56590 / IMMIB L-1110).